The sequence spans 197 residues: Pinin homolog 1 (197 aa).

The tract at residues 30–73 (LDGKVNNEDSHMEIDQPEGSMEEDDHRQVKEKNTSENSVEQKRG) is disordered. 2 stretches are compositionally biased toward basic and acidic residues: residues 34–43 (VNNEDSHMEI) and 53–71 (DDHR…VEQK).

It belongs to the pinin family.

It localises to the nucleus. The protein resides in the cytoplasm. In terms of biological role, transcriptional activator that may participate in the regulation of mRNA splicing. This chain is Pinin homolog 1 (pnn1), found in Schizosaccharomyces pombe (strain 972 / ATCC 24843) (Fission yeast).